Reading from the N-terminus, the 368-residue chain is Geranylgeranyl pyrophosphate synthase dpfgD (368 aa).

3 residues coordinate isopentenyl diphosphate: K48, R51, and H80. Mg(2+) is bound by residues D87 and D91. Position 96 (R96) interacts with dimethylallyl diphosphate. R97 contacts isopentenyl diphosphate. 3 residues coordinate dimethylallyl diphosphate: K174, T175, and Q208. Mg(2+) is bound at residue D211. 3 residues coordinate dimethylallyl diphosphate: N215, K225, and K235.

The protein belongs to the FPP/GGPP synthase family. Requires Mg(2+) as cofactor.

The catalysed reaction is isopentenyl diphosphate + dimethylallyl diphosphate = (2E)-geranyl diphosphate + diphosphate. The enzyme catalyses isopentenyl diphosphate + (2E)-geranyl diphosphate = (2E,6E)-farnesyl diphosphate + diphosphate. It catalyses the reaction isopentenyl diphosphate + (2E,6E)-farnesyl diphosphate = (2E,6E,10E)-geranylgeranyl diphosphate + diphosphate. The protein operates within secondary metabolite biosynthesis; terpenoid biosynthesis. Functionally, geranylgeranyl pyrophosphate synthase; part of the gene cluster that mediates the biosynthesis of diterpenoid pyrones. The first step of the pathway is the synthesis of the alpha-pyrone moiety by the polyketide synthase dpfgA via condensation of one acetyl-CoA starter unit with 3 malonyl-CoA units and 2 methylations. The alpha-pyrone is then combined with geranylgeranyl pyrophosphate (GGPP) formed by the GGPP synthase dpfgD through the action of the prenyltransferase dpfgC to yield a linear alpha-pyrone diterpenoid. Subsequent steps in the diterpenoid pyrone biosynthetic pathway involve the decalin core formation, which is initiated by the epoxidation of the C10-C11 olefin by the FAD-dependent oxidoreductase dpfgE, and is followed by a cyclization cascade catalyzed by the terpene cyclase dpfgB. The short chain dehydrogenase/reductase dpfgG then oxidizes the 8S hydroxy group to a ketone and the short chain dehydrogenase/reductase dpfgH reduces the ketone to the 8R hydroxy group to yield higginsianin B. Higginsianin B is further methylated by the methyltransferase dpfgI to produce the intermediate named FDDP B. The cytochrome P450 monooxygenase dfgpJ then catalyzes a three-step oxidation at C-27 to generate a carboxylic acid as well as C-26 hydroxylation. Finally, methyltransferase dpfgK methylates the carboxylic acid generated by dpfgJ, yielding the final diterpenoid pyrones from the pathway which were named FDDP D and FDDP E. This is Geranylgeranyl pyrophosphate synthase dpfgD from Gibberella zeae (strain ATCC MYA-4620 / CBS 123657 / FGSC 9075 / NRRL 31084 / PH-1) (Wheat head blight fungus).